The chain runs to 161 residues: Cytidylate kinase (161 aa).

7–15 serves as a coordination point for ATP; the sequence is GLAGTGTTT.

It belongs to the cytidylate kinase family. Type 2 subfamily.

The protein localises to the cytoplasm. It carries out the reaction CMP + ATP = CDP + ADP. It catalyses the reaction dCMP + ATP = dCDP + ADP. The chain is Cytidylate kinase (cmk) from Methanothermobacter thermautotrophicus (strain ATCC 29096 / DSM 1053 / JCM 10044 / NBRC 100330 / Delta H) (Methanobacterium thermoautotrophicum).